Here is a 191-residue protein sequence, read N- to C-terminus: LOB domain-containing protein 19 (191 aa).

The LOB domain occupies 15 to 117 (GPCGACKFLR…AELAHVQARL (103 aa)).

Belongs to the LOB domain-containing protein family. As to expression, expressed in shoots, roots and floral tissues, but not in stems or leaves.

The polypeptide is LOB domain-containing protein 19 (LBD19) (Arabidopsis thaliana (Mouse-ear cress)).